The chain runs to 145 residues: 3-hydroxyacyl-[acyl-carrier-protein] dehydratase FabZ (145 aa).

His49 is a catalytic residue.

Belongs to the thioester dehydratase family. FabZ subfamily.

The protein resides in the cytoplasm. It carries out the reaction a (3R)-hydroxyacyl-[ACP] = a (2E)-enoyl-[ACP] + H2O. Involved in unsaturated fatty acids biosynthesis. Catalyzes the dehydration of short chain beta-hydroxyacyl-ACPs and long chain saturated and unsaturated beta-hydroxyacyl-ACPs. In Rickettsia massiliae (strain Mtu5), this protein is 3-hydroxyacyl-[acyl-carrier-protein] dehydratase FabZ.